Consider the following 704-residue polypeptide: Pentatricopeptide repeat-containing protein At1g56690, mitochondrial (704 aa).

A mitochondrion-targeting transit peptide spans 1–12; that stretch reads MKRLKLILRRTY. 15 PPR repeats span residues 16–46, 47–81, 82–108, 109–143, 144–170, 171–205, 206–232, 233–267, 268–294, 295–329, 330–364, 365–395, 396–430, 431–465, and 467–497; these read TGVNCSFEISRLSRIGKINEARKFFDSLQFK, AIGSWNSIVSGYFSNGLPKEARQLFDEMSERNVVS, WNGLVSGYIKNRMIVEARNVFELMPER, NVVSWTAMVKGYMQEGMVGEAESLFWRMPERNEVS, WTVMFGGLIDDGRIDKARKLYDMMPVK, DVVASTNMIGGLCREGRVDEARLIFDEMRERNVVT, WTTMITGYRQNNRVDVARKLFEVMPEK, TEVSWTSMLLGYTLSGRIEDAEEFFEVMPMKPVIA, CNAMIVGFGEVGEISKARRVFDLMEDR, DNATWRGMIKAYERKGFELEALDLFAQMQKQGVRP, SFPSLISILSVCATLASLQYGRQVHAHLVRCQFDD, DVYVASVLMTMYVKCGELVKAKLVFDRFSSK, DIIMWNSIISGYASHGLGEEALKIFHEMPSSGTMP, NKVTLIAILTACSYAGKLEEGLEIFESMESKFCVT, and TVEHYSCTVDMLGRAGQVDKAMELIESMTIK. Residues 502–577 form a type E motif region; the sequence is VWGALLGACK…FPGCSWIEVG (76 aa). The interval 578–609 is type E(+) motif; the sequence is KKVHMFTRGGIKNHPEQAMILMMLEKTDGLLR. Residues 610-704 are type DYW motif; that stretch reads EAGYSPDCSH…NGECSCRDYW (95 aa).

Belongs to the PPR family. PCMP-H subfamily.

Its subcellular location is the mitochondrion. In Arabidopsis thaliana (Mouse-ear cress), this protein is Pentatricopeptide repeat-containing protein At1g56690, mitochondrial (PCMP-H69).